The following is a 755-amino-acid chain: Cartilage oligomeric matrix protein (755 aa).

The signal sequence occupies residues 1–19 (MGPTACVLVLALAILRATG). The interval 21–84 (GQIPLGGDLA…PARTPGLSVR (64 aa)) is COMP N-terminal. The EGF-like 1 domain maps to 85-124 (PVPLCAPGSCFPGVVCSETATGARCGPCPPGYTGNGSHCT). 21 disulfide bridges follow: cysteine 89/cysteine 100, cysteine 94/cysteine 109, cysteine 112/cysteine 123, cysteine 129/cysteine 140, cysteine 134/cysteine 149, cysteine 152/cysteine 176, cysteine 182/cysteine 195, cysteine 189/cysteine 204, cysteine 207/cysteine 219, cysteine 227/cysteine 241, cysteine 235/cysteine 251, cysteine 253/cysteine 264, cysteine 280/cysteine 285, cysteine 290/cysteine 310, cysteine 326/cysteine 346, cysteine 349/cysteine 369, cysteine 385/cysteine 405, cysteine 408/cysteine 428, cysteine 446/cysteine 466, cysteine 482/cysteine 502, and cysteine 518/cysteine 739. A glycan (N-linked (GlcNAc...) asparagine) is linked at asparagine 119. The region spanning 125-177 (DVNECNAHPCFPRVRCINTSPGFHCEACPPGFSGPTHEGVGLTFAKSNKQVCT) is the EGF-like 2; calcium-binding domain. In terms of domain architecture, EGF-like 3; calcium-binding spans 178–220 (DINECETGQHNCVPNSVCVNTRGSFQCGPCQPGFVGDQTSGCQ). The region spanning 223–265 (GQHFCPDGSPSPCHEKANCVLERDGSRSCVCAVGWAGNGLLCG) is the EGF-like 4 domain. 8 TSP type-3 repeats span residues 266–298 (RDTD…NSGQ), 299–334 (EDVD…NPDQ), 335–357 (RNSD…NDDQ), 358–393 (KDTD…NFDQ), 394–416 (SDSD…NPDQ), 417–454 (RDVD…NSAQ), 455–490 (QDSD…NPGQ), and 491–526 (EDND…EVTL). Disordered stretches follow at residues 296-341 (SGQE…DSDK) and 353-501 (KNDD…VGDA). 2 stretches are compositionally biased toward basic and acidic residues: residues 332 to 341 (PDQRNSDSDK) and 353 to 368 (KNDD…RGDA). A Phosphoserine modification is found at serine 394. Composition is skewed to basic and acidic residues over residues 412–424 (DNPD…HDFV) and 456–465 (DSDHDGKGDA). A mediates cell survival and induction of the IAP family of survival proteins region spans residues 525–755 (TLTDFRAFQT…DYESHRLQRV (231 aa)). Positions 530-744 (RAFQTVVLDP…LRYRCNDTIP (215 aa)) constitute a TSP C-terminal domain. Asparagine 740 carries N-linked (GlcNAc...) asparagine glycosylation.

This sequence belongs to the thrombospondin family. As to quaternary structure, pentamer; disulfide-linked. Exists in a more compact conformation in the presence of calcium and shows a more extended conformation in the absence of calcium. Interacts with ITGB3, ITGA5 and FN1. Binding to FN1 requires the presence of divalent cations (Ca(2+), Mg(2+) or Mn(2+)). The greatest amount of binding is seen in the presence of Mn(2+). Interacts with MATN1, MATN3, MATN4 and ACAN. Binds heparin, heparan sulfate and chondroitin sulfate. EDTA dimishes significantly its binding to ACAN and abolishes its binding to MATN3, MATN4 and chondroitin sulfate. Interacts with collagen I, II and IX, and interaction with these collagens is dependent on the presence of zinc ions. Interacts with ADAMTS12. Interacts with ITGA7. It depends on Ca(2+) as a cofactor. Post-translationally, proteolytically cleaved by metalloproteases ADAMTS4 and ADAMTS1 with ADAMTS4 showing more potent activity. Expressed in cartilage, including nasal, knee epiphyseal and rib tissues. Abundantly expressed in chondrocyte and tendon extracellular matrix (at protein level).

It is found in the secreted. It localises to the extracellular space. The protein resides in the extracellular matrix. In terms of biological role, plays a role in the structural integrity of cartilage via its interaction with other extracellular matrix proteins such as the collagens and fibronectin. Can mediate the interaction of chondrocytes with the cartilage extracellular matrix through interaction with cell surface integrin receptors. Could play a role in the pathogenesis of osteoarthritis. Potent suppressor of apoptosis in both primary chondrocytes and transformed cells. Suppresses apoptosis by blocking the activation of caspase-3 and by inducing the IAP family of survival proteins (BIRC3, BIRC2, BIRC5 and XIAP). Essential for maintaining a vascular smooth muscle cells (VSMCs) contractile/differentiated phenotype under physiological and pathological stimuli. Maintains this phenotype of VSMCs by interacting with ITGA7. This is Cartilage oligomeric matrix protein from Mus musculus (Mouse).